Here is a 611-residue protein sequence, read N- to C-terminus: Calmegin (611 aa).

The signal sequence occupies residues 1 to 19 (MRFQGVGLCLGLLFITVNA). Residues 20–471 (DFMDDGVEVE…LVIAAEERPW (452 aa)) are Lumenal-facing. At Lys128 the chain carries N6-acetyllysine. Residues Cys151 and Cys185 are joined by a disulfide bond. Positions 254–335 (LDDVVPPINP…KAEKPEDWSD (82 aa)) are disordered. Basic and acidic residues predominate over residues 265-284 (REIDDPSDKKPEEWDDRAKI). 8 repeat units span residues 267–280 (IDDP…EWDD), 284–297 (IPDP…DWDE), 303–316 (IEDS…GWLD), 322–335 (IPNP…DWSD), 339–352 (GEWE…PACQ), 356–369 (GEWK…PKYK), 370–383 (GIWR…PNYQ), and 384–397 (GLWS…PDYF). Residues 317–350 (DEPKFIPNPKAEKPEDWSDDMDGEWEAPHIPNPA) form an interaction with PPIB region. An intrachain disulfide couples Cys351 to Cys355. Residues 472–492 (LWLMYLVMAGLPVALVASFCW) form a helical membrane-spanning segment. Residues 493–611 (PRKVKKKYED…SLRKRRVRKD (119 aa)) are Cytoplasmic-facing. The tract at residues 517–611 (AALEQEAEEE…SLRKRRVRKD (95 aa)) is disordered. Residues 526 to 584 (EKAPEKPEDVQEEKKPGEAEVVTVEKEVIGEPEEKSKEDRETLEGQEEVSKLSKSGSED) are compositionally biased toward basic and acidic residues. A phosphoserine mark is found at Ser561, Ser578, Ser580, Ser582, Ser592, Ser595, and Ser602. The span at 602–611 (SLRKRRVRKD) shows a compositional bias: basic residues.

The protein belongs to the calreticulin family. As to quaternary structure, interacts with PDILT and PPIB. Interacts with ADAM2. Interacts with ADAM1A, ADAM1B and ADAM3; these are protein-coding genes in mouse but may be pseudogenes in other organisms. As to expression, detected in testis (at protein level). Detected in testis.

Its subcellular location is the endoplasmic reticulum membrane. In terms of biological role, functions during spermatogenesis as a chaperone for a range of client proteins that are important for sperm adhesion onto the egg zona pellucida and for subsequent penetration of the zona pellucida. Required for normal sperm migration from the uterus into the oviduct. Required for normal male fertility. Binds calcium ions. This is Calmegin (Clgn) from Mus musculus (Mouse).